The sequence spans 392 residues: Formate-dependent phosphoribosylglycinamide formyltransferase (392 aa).

N(1)-(5-phospho-beta-D-ribosyl)glycinamide is bound by residues 22-23 and E82; that span reads EL. Residues R114, K155, 160 to 165, 195 to 198, and E203 each bind ATP; these read SSGKGQ and EGVV. The ATP-grasp domain maps to 119–308; the sequence is RLAAEELGLP…EFALHVRAFL (190 aa). The Mg(2+) site is built by E267 and E279. N(1)-(5-phospho-beta-D-ribosyl)glycinamide contacts are provided by residues D286, K355, and 362-363; that span reads RR.

The protein belongs to the PurK/PurT family. As to quaternary structure, homodimer.

The enzyme catalyses N(1)-(5-phospho-beta-D-ribosyl)glycinamide + formate + ATP = N(2)-formyl-N(1)-(5-phospho-beta-D-ribosyl)glycinamide + ADP + phosphate + H(+). Its pathway is purine metabolism; IMP biosynthesis via de novo pathway; N(2)-formyl-N(1)-(5-phospho-D-ribosyl)glycinamide from N(1)-(5-phospho-D-ribosyl)glycinamide (formate route): step 1/1. In terms of biological role, involved in the de novo purine biosynthesis. Catalyzes the transfer of formate to 5-phospho-ribosyl-glycinamide (GAR), producing 5-phospho-ribosyl-N-formylglycinamide (FGAR). Formate is provided by PurU via hydrolysis of 10-formyl-tetrahydrofolate. In Salmonella arizonae (strain ATCC BAA-731 / CDC346-86 / RSK2980), this protein is Formate-dependent phosphoribosylglycinamide formyltransferase.